A 460-amino-acid polypeptide reads, in one-letter code: 1-aminocyclopropane-1-carboxylate synthase 11 (460 aa).

Residues Glu-45 and Tyr-83 each contribute to the substrate site. Position 267 is an N6-(pyridoxal phosphate)lysine (Lys-267).

This sequence belongs to the class-I pyridoxal-phosphate-dependent aminotransferase family. Homodimer and heterodimer. In vivo, the relevance of heterodimerization with other ACS enzymes is however unsure. Interacts with GRF3. Pyridoxal 5'-phosphate is required as a cofactor. Post-translationally, may be processed at its C-terminus. In terms of tissue distribution, expressed in roots.

It catalyses the reaction S-adenosyl-L-methionine = 1-aminocyclopropane-1-carboxylate + S-methyl-5'-thioadenosine + H(+). It participates in alkene biosynthesis; ethylene biosynthesis via S-adenosyl-L-methionine; ethylene from S-adenosyl-L-methionine: step 1/2. Its function is as follows. 1-aminocyclopropane-1-carboxylate synthase (ACS) enzymes catalyze the conversion of S-adenosyl-L-methionine (SAM) into 1-aminocyclopropane-1-carboxylate (ACC), a direct precursor of ethylene. The polypeptide is 1-aminocyclopropane-1-carboxylate synthase 11 (ACS11) (Arabidopsis thaliana (Mouse-ear cress)).